The primary structure comprises 564 residues: Probable metalloprotease ARX1 (564 aa).

It belongs to the peptidase M24 family. In terms of assembly, component of the nucleoplasmic and cytoplasmic pre-60S ribosomal particles.

It localises to the cytoplasm. The protein localises to the nucleus. Probable metalloprotease involved in proper assembly of pre-ribosomal particles during the biogenesis of the 60S ribosomal subunit. Accompanies the pre-60S particles to the cytoplasm. This Candida albicans (strain SC5314 / ATCC MYA-2876) (Yeast) protein is Probable metalloprotease ARX1 (ARX1).